The primary structure comprises 391 residues: Phosphoglycerate kinase (391 aa).

Residues 21–23 (DLN), arginine 36, 59–62 (HLGR), arginine 113, and arginine 146 contribute to the substrate site. ATP is bound by residues lysine 197, glutamate 319, and 345-348 (GGDT).

This sequence belongs to the phosphoglycerate kinase family. In terms of assembly, monomer.

The protein localises to the cytoplasm. It catalyses the reaction (2R)-3-phosphoglycerate + ATP = (2R)-3-phospho-glyceroyl phosphate + ADP. It functions in the pathway carbohydrate degradation; glycolysis; pyruvate from D-glyceraldehyde 3-phosphate: step 2/5. In Shewanella sediminis (strain HAW-EB3), this protein is Phosphoglycerate kinase.